The chain runs to 146 residues: Snaclec coagulation factor IX/factor X-binding protein subunit B (146 aa).

An N-terminal signal peptide occupies residues 1-23 (MGRFIFMSFGFLVVFLSLSGTAA). The C-type lectin domain occupies 24–146 (DCPSDWSSYE…MAQFVCEFQA (123 aa)). Disulfide bonds link Cys25/Cys36, Cys53/Cys142, and Cys119/Cys134. Residues Ser64, Gln66, and Glu70 each contribute to the Ca(2+) site. Residue Glu143 participates in Ca(2+) binding.

It belongs to the snaclec family. Heterodimer with subunit A of IX/X-bp or IX-bp; disulfide-linked. As to expression, expressed by the venom gland.

The protein localises to the secreted. Functionally, when linked to subunit A of IX/X-bp, anticoagulant protein which binds to the gamma-carboxyglutamic acid-domain regions of factors IX (F9) and factor X (10) in the presence of calcium with a 1 to 1 stoichiometry. In terms of biological role, when linked to subunit A of IX-bp, anticoagulant protein which binds to the gamma-carboxyglutamic acid-domain regions of factor IX (but not to factor X) in the presence of calcium with a 1 to 1 stoichiometry. The sequence is that of Snaclec coagulation factor IX/factor X-binding protein subunit B from Protobothrops flavoviridis (Habu).